A 616-amino-acid chain; its full sequence is Chaperone protein HscA (616 aa).

This sequence belongs to the heat shock protein 70 family.

In terms of biological role, chaperone involved in the maturation of iron-sulfur cluster-containing proteins. Has a low intrinsic ATPase activity which is markedly stimulated by HscB. Involved in the maturation of IscU. This Serratia proteamaculans (strain 568) protein is Chaperone protein HscA.